The following is a 155-amino-acid chain: Ribonuclease H (155 aa).

Residues Met1–Met142 form the RNase H type-1 domain. Residues Asp10, Glu48, Asp70, and Asp134 each coordinate Mg(2+).

Belongs to the RNase H family. In terms of assembly, monomer. Requires Mg(2+) as cofactor.

The protein resides in the cytoplasm. The catalysed reaction is Endonucleolytic cleavage to 5'-phosphomonoester.. Functionally, endonuclease that specifically degrades the RNA of RNA-DNA hybrids. This chain is Ribonuclease H, found in Citrobacter koseri (strain ATCC BAA-895 / CDC 4225-83 / SGSC4696).